Here is a 245-residue protein sequence, read N- to C-terminus: tRNA1(Val) (adenine(37)-N6)-methyltransferase (245 aa).

It belongs to the methyltransferase superfamily. tRNA (adenine-N(6)-)-methyltransferase family.

The protein localises to the cytoplasm. The catalysed reaction is adenosine(37) in tRNA1(Val) + S-adenosyl-L-methionine = N(6)-methyladenosine(37) in tRNA1(Val) + S-adenosyl-L-homocysteine + H(+). In terms of biological role, specifically methylates the adenine in position 37 of tRNA(1)(Val) (anticodon cmo5UAC). In Escherichia coli O157:H7 (strain EC4115 / EHEC), this protein is tRNA1(Val) (adenine(37)-N6)-methyltransferase.